We begin with the raw amino-acid sequence, 169 residues long: Ribosome maturation factor RimM (169 aa).

The PRC barrel domain maps to 93 to 166; that stretch reads GEHEFYYHEI…RIQITPLPGL (74 aa).

This sequence belongs to the RimM family. As to quaternary structure, binds ribosomal protein uS19.

The protein localises to the cytoplasm. In terms of biological role, an accessory protein needed during the final step in the assembly of 30S ribosomal subunit, possibly for assembly of the head region. Essential for efficient processing of 16S rRNA. May be needed both before and after RbfA during the maturation of 16S rRNA. It has affinity for free ribosomal 30S subunits but not for 70S ribosomes. This chain is Ribosome maturation factor RimM, found in Exiguobacterium sibiricum (strain DSM 17290 / CCUG 55495 / CIP 109462 / JCM 13490 / 255-15).